The chain runs to 616 residues: Mitochondrial Rho GTPase 2 (616 aa).

At 1-590 (MKRDVRILLL…HDTELSTASF (590 aa)) the chain is on the cytoplasmic side. A Miro 1 domain is found at 2-168 (KRDVRILLLG…FYYAQKAVLH (167 aa)). Positions 16, 17, 18, and 19 each coordinate GTP. Thr-18 lines the Mg(2+) pocket. Asp-57 is a Mg(2+) binding site. Residues Ser-59, Asn-118, Lys-119, Asp-121, Ala-149, and Lys-150 each contribute to the GTP site. EF-hand domains are found at residues 184–219 (QCKK…CFGN) and 304–339 (FGYQ…FPYT). Ca(2+)-binding residues include Asp-199, Asn-201, Glu-208, Asp-317, Asp-319, Asp-321, and Glu-328. A Miro 2 domain is found at 416-577 (RNVFLCRVIG…YSKLATAAAF (162 aa)). Gly-428, Gly-430, Lys-431, Ser-432, and Ala-433 together coordinate GTP. Mg(2+) is bound at residue Ser-432. Glu-474 lines the Mg(2+) pocket. GTP-binding residues include Lys-528, Asp-530, and Cys-559. Residues 591–613 (WLRVALGATVAAVVGFTLYKALL) traverse the membrane as a helical; Anchor for type IV membrane protein segment. Residues 614-616 (RSK) are Mitochondrial intermembrane-facing.

This sequence belongs to the mitochondrial Rho GTPase family. Homodimer.

It localises to the mitochondrion outer membrane. The enzyme catalyses GTP + H2O = GDP + phosphate + H(+). The catalysed reaction is ATP + H2O = ADP + phosphate + H(+). It carries out the reaction UTP + H2O = UDP + phosphate + H(+). Atypical mitochondrial nucleoside-triphosphatase (NTPase) involved in mitochondrial trafficking. Probably involved in control of anterograde transport of mitochondria and their subcellular distribution. Can hydrolyze GTP, ATP and UTP. The polypeptide is Mitochondrial Rho GTPase 2 (rhot2) (Xenopus tropicalis (Western clawed frog)).